The following is a 306-amino-acid chain: N-acetylmuramic acid 6-phosphate etherase (306 aa).

An SIS domain is found at 59–222; it reads TAQALGRGGR…STGVMVCLGK (164 aa). The active-site Proton donor is glutamate 87. The active site involves glutamate 118.

Belongs to the GCKR-like family. MurNAc-6-P etherase subfamily. Homodimer.

The enzyme catalyses N-acetyl-D-muramate 6-phosphate + H2O = N-acetyl-D-glucosamine 6-phosphate + (R)-lactate. Its pathway is amino-sugar metabolism; N-acetylmuramate degradation. Specifically catalyzes the cleavage of the D-lactyl ether substituent of MurNAc 6-phosphate, producing GlcNAc 6-phosphate and D-lactate. This is N-acetylmuramic acid 6-phosphate etherase from Rippkaea orientalis (strain PCC 8801 / RF-1) (Cyanothece sp. (strain PCC 8801)).